A 1053-amino-acid polypeptide reads, in one-letter code: Polyphosphate kinase (1053 aa).

Disordered stretches follow at residues 23–155 (LKIN…QLME), 200–245 (VQNP…TKSK), and 302–328 (NNNN…STSP). Residues 32–50 (STTTTTSTTTTTTTTTSTS) are compositionally biased toward low complexity. Over residues 81–102 (VDFEDDYDEESSSFDEEDEDSA) the composition is skewed to acidic residues. Polar residues predominate over residues 143–155 (TTANPVQNCQLME). Residues 215 to 239 (SSGSSSSSSSNNNNSNSNSNGNCNS) are compositionally biased toward low complexity. Catalysis depends on histidine 800, which acts as the Phosphohistidine intermediate. Residues 1027–1053 (RSSPIDEDSQTQFMNQTNQKHPVIWSK) are disordered. Residues 1036-1046 (QTQFMNQTNQK) show a composition bias toward polar residues.

The protein belongs to the polyphosphate kinase 1 (PPK1) family. Hexamer. May form higher oligomeric structures in the presence of ATP.

It localises to the vesicle. It catalyses the reaction [phosphate](n) + ATP = [phosphate](n+1) + ADP. Catalyzes the reversible transfer of the terminal phosphate of ATP to form a long-chain polyphosphate (polyP). Produces polyP in a broad range of chain lengths (50-300 Pi residues). Involved in development (growth and fruiting body formation), sporulation, phagocytosis, cell division and the late stages of cytokinesis. The chain is Polyphosphate kinase (ppkA) from Dictyostelium discoideum (Social amoeba).